A 180-amino-acid polypeptide reads, in one-letter code: UPF0227 protein YcfP (180 aa).

Belongs to the UPF0227 family.

This Salmonella choleraesuis (strain SC-B67) protein is UPF0227 protein YcfP.